The primary structure comprises 167 residues: Crossover junction endodeoxyribonuclease RuvC (167 aa).

Active-site residues include Asp-7, Glu-67, and Asp-139. Mg(2+) is bound by residues Asp-7, Glu-67, and Asp-139.

It belongs to the RuvC family. As to quaternary structure, homodimer which binds Holliday junction (HJ) DNA. The HJ becomes 2-fold symmetrical on binding to RuvC with unstacked arms; it has a different conformation from HJ DNA in complex with RuvA. In the full resolvosome a probable DNA-RuvA(4)-RuvB(12)-RuvC(2) complex forms which resolves the HJ. Mg(2+) is required as a cofactor.

It localises to the cytoplasm. The enzyme catalyses Endonucleolytic cleavage at a junction such as a reciprocal single-stranded crossover between two homologous DNA duplexes (Holliday junction).. The RuvA-RuvB-RuvC complex processes Holliday junction (HJ) DNA during genetic recombination and DNA repair. Endonuclease that resolves HJ intermediates. Cleaves cruciform DNA by making single-stranded nicks across the HJ at symmetrical positions within the homologous arms, yielding a 5'-phosphate and a 3'-hydroxyl group; requires a central core of homology in the junction. The consensus cleavage sequence is 5'-(A/T)TT(C/G)-3'. Cleavage occurs on the 3'-side of the TT dinucleotide at the point of strand exchange. HJ branch migration catalyzed by RuvA-RuvB allows RuvC to scan DNA until it finds its consensus sequence, where it cleaves and resolves the cruciform DNA. The protein is Crossover junction endodeoxyribonuclease RuvC of Zymomonas mobilis subsp. mobilis (strain ATCC 31821 / ZM4 / CP4).